A 449-amino-acid chain; its full sequence is XK-related protein 2 (449 aa).

A run of 10 helical transmembrane segments spans residues 35–55, 68–88, 98–118, 174–194, 202–222, 241–261, 269–289, 306–326, 357–377, and 382–402; these read FSIL…LYMV, TYTF…LIFV, LSLF…EAMI, IQAF…SLIS, VVLM…CNML, LCIT…LVLF, AVPF…IKFW, VGTL…NFSC, LVEN…VLLN, and LIAL…LLFF.

This sequence belongs to the XK family. As to expression, expressed predominantly in the placenta, in syncytiotrophoblasts. Moderate levels in the adrenal gland, low levels in the trachea and very low levels in the bone marrow.

The protein localises to the cell membrane. The sequence is that of XK-related protein 2 (XKRX) from Homo sapiens (Human).